The primary structure comprises 376 residues: Putative F-box protein At1g53370 (376 aa).

In terms of domain architecture, F-box spans 22-71 (RNYIDSIPVDLLIDILSRFPPKSIARFYCVSKLWESILRGPDFTELYLTK).

This chain is Putative F-box protein At1g53370, found in Arabidopsis thaliana (Mouse-ear cress).